Consider the following 300-residue polypeptide: SNAP25 homologous protein SNAP33 (300 aa).

2 disordered regions span residues 1 to 76 (MFGL…QSLF) and 176 to 228 (WKPK…PESA). Ser-29 carries the phosphoserine modification. Residues 38–49 (TLNPSKRTTSEP) show a composition bias toward polar residues. The segment covering 190–208 (TRDDSPTRRVNHLEKREKL) has biased composition (basic and acidic residues). Residues 235-297 (EMEKAKQDDG…QQSNQRGRRL (63 aa)) enclose the t-SNARE coiled-coil homology domain.

The protein belongs to the SNAP-25 family. In terms of assembly, interacts with the cytokinesis-specific syntaxin KNOLLE and with SYP121. Binds to EXO70B2. As to expression, ubiquitous, with a strong expression in root tips, ovules, very young leaves, vascular tissue, hydathodes, stipules and the abscission and dehiscence zones of the siliques.

Its subcellular location is the membrane. In terms of biological role, t-SNARE involved in diverse vesicle trafficking and membrane fusion processes, including cell plate formation. May function in the secretory pathway. The protein is SNAP25 homologous protein SNAP33 of Arabidopsis thaliana (Mouse-ear cress).